The sequence spans 478 residues: Alpha-1,3-mannosyl-glycoprotein 4-beta-N-acetylglucosaminyltransferase C (478 aa).

Topologically, residues 1-23 (MFKFHQMKHIFEILDKMRCLRKR) are cytoplasmic. A helical; Signal-anchor for type II membrane protein transmembrane segment spans residues 24 to 44 (STVSFLGVLVIFLLFMNLYIE). Topologically, residues 45–478 (DSYVLEGDKQ…IIRSISIWTS (434 aa)) are lumenal. Asn-84 and Asn-215 each carry an N-linked (GlcNAc...) asparagine glycan.

Belongs to the glycosyltransferase 54 family. It depends on a divalent metal cation as a cofactor.

The protein localises to the golgi apparatus membrane. The catalysed reaction is N(4)-{beta-D-GlcNAc-(1-&gt;2)-alpha-D-Man-(1-&gt;3)-[beta-D-GlcNAc-(1-&gt;2)-alpha-D-Man-(1-&gt;6)]-beta-D-Man-(1-&gt;4)-beta-D-GlcNAc-(1-&gt;4)-beta-D-GlcNAc}-L-asparaginyl-[protein] + UDP-N-acetyl-alpha-D-glucosamine = N(4)-{beta-D-GlcNAc-(1-&gt;2)-[beta-D-GlcNAc-(1-&gt;4)]-alpha-D-Man-(1-&gt;3)-[beta-D-GlcNAc-(1-&gt;2)-alpha-D-Man-(1-&gt;6)]-beta-D-Man-(1-&gt;4)-beta-D-GlcNAc-(1-&gt;4)-beta-D-GlcNAc}-L-asparaginyl-[protein] + UDP + H(+). It functions in the pathway protein modification; protein glycosylation. Glycosyltransferase that participates in the transfer of N-acetylglucosamine (GlcNAc) to the core mannose residues of N-linked glycans. Catalyzes the formation of the GlcNAcbeta1-4 branch on the GlcNAcbeta1-2Manalpha1-3 arm of the core structure of N-linked glycans. Essential for the production of tri- and tetra-antennary N-linked sugar chains. Does not catalyze the transfer of GlcNAc to the Manalpha1-6 arm to form GlcNAcBeta1-4Manalpha1-6 linkage ('GnT-VI' activity). This Macaca fascicularis (Crab-eating macaque) protein is Alpha-1,3-mannosyl-glycoprotein 4-beta-N-acetylglucosaminyltransferase C (MGAT4C).